We begin with the raw amino-acid sequence, 398 residues long: Dual-specificity RNA methyltransferase RlmN (398 aa).

The Proton acceptor role is filled by Glu-119. A Radical SAM core domain is found at 125-364 (EEERATLCVS…TIVRKTRGDD (240 aa)). A disulfide bridge connects residues Cys-132 and Cys-369. The [4Fe-4S] cluster site is built by Cys-139, Cys-143, and Cys-146. Residues 193–194 (GE), Ser-225, 247–249 (SLH), and Asn-326 each bind S-adenosyl-L-methionine. Cys-369 functions as the S-methylcysteine intermediate in the catalytic mechanism.

The protein belongs to the radical SAM superfamily. RlmN family. It depends on [4Fe-4S] cluster as a cofactor.

The protein localises to the cytoplasm. The enzyme catalyses adenosine(2503) in 23S rRNA + 2 reduced [2Fe-2S]-[ferredoxin] + 2 S-adenosyl-L-methionine = 2-methyladenosine(2503) in 23S rRNA + 5'-deoxyadenosine + L-methionine + 2 oxidized [2Fe-2S]-[ferredoxin] + S-adenosyl-L-homocysteine. The catalysed reaction is adenosine(37) in tRNA + 2 reduced [2Fe-2S]-[ferredoxin] + 2 S-adenosyl-L-methionine = 2-methyladenosine(37) in tRNA + 5'-deoxyadenosine + L-methionine + 2 oxidized [2Fe-2S]-[ferredoxin] + S-adenosyl-L-homocysteine. Specifically methylates position 2 of adenine 2503 in 23S rRNA and position 2 of adenine 37 in tRNAs. m2A2503 modification seems to play a crucial role in the proofreading step occurring at the peptidyl transferase center and thus would serve to optimize ribosomal fidelity. This chain is Dual-specificity RNA methyltransferase RlmN, found in Pectobacterium atrosepticum (strain SCRI 1043 / ATCC BAA-672) (Erwinia carotovora subsp. atroseptica).